The following is a 305-amino-acid chain: UDP-3-O-acyl-N-acetylglucosamine deacetylase (305 aa).

Zn(2+) contacts are provided by H79, H238, and D242. The Proton donor role is filled by H265.

It belongs to the LpxC family. The cofactor is Zn(2+).

The catalysed reaction is a UDP-3-O-[(3R)-3-hydroxyacyl]-N-acetyl-alpha-D-glucosamine + H2O = a UDP-3-O-[(3R)-3-hydroxyacyl]-alpha-D-glucosamine + acetate. It functions in the pathway glycolipid biosynthesis; lipid IV(A) biosynthesis; lipid IV(A) from (3R)-3-hydroxytetradecanoyl-[acyl-carrier-protein] and UDP-N-acetyl-alpha-D-glucosamine: step 2/6. Its function is as follows. Catalyzes the hydrolysis of UDP-3-O-myristoyl-N-acetylglucosamine to form UDP-3-O-myristoylglucosamine and acetate, the committed step in lipid A biosynthesis. The protein is UDP-3-O-acyl-N-acetylglucosamine deacetylase of Proteus mirabilis (strain HI4320).